The primary structure comprises 586 residues: Aspartate--tRNA(Asp/Asn) ligase (586 aa).

E176 serves as a coordination point for L-aspartate. The tract at residues 200–203 (QIFK) is aspartate. R222 contacts L-aspartate. ATP-binding positions include 222–224 (RDE) and Q231. H449 lines the L-aspartate pocket. Position 483 (E483) interacts with ATP. R490 contributes to the L-aspartate binding site. An ATP-binding site is contributed by 535–538 (GIDR).

The protein belongs to the class-II aminoacyl-tRNA synthetase family. Type 1 subfamily. As to quaternary structure, homodimer.

It is found in the cytoplasm. It carries out the reaction tRNA(Asx) + L-aspartate + ATP = L-aspartyl-tRNA(Asx) + AMP + diphosphate. Aspartyl-tRNA synthetase with relaxed tRNA specificity since it is able to aspartylate not only its cognate tRNA(Asp) but also tRNA(Asn). Reaction proceeds in two steps: L-aspartate is first activated by ATP to form Asp-AMP and then transferred to the acceptor end of tRNA(Asp/Asn). The chain is Aspartate--tRNA(Asp/Asn) ligase from Brachyspira hyodysenteriae (strain ATCC 49526 / WA1).